We begin with the raw amino-acid sequence, 204 residues long: MASDYFDIAIALAGVCQAAKLVQQFAHNGEADLNALETSLYSLLQTEPENIAAVYRGSLANIKLGLETLIEQLNAMDTELARYWLGILALSGKLTKSADAKNALASRMQYLPAQLEHYGLCSDMTFEKMATIYTDIISPLGKKIHVIGSSLYLQQPSMHNRIRACLLAGIRSAILWQQVGGTKWQILFSRRKILKAAKHIYETI.

Belongs to the HflD family.

The protein resides in the cytoplasm. It localises to the cell inner membrane. The protein is High frequency lysogenization protein HflD homolog of Actinobacillus succinogenes (strain ATCC 55618 / DSM 22257 / CCUG 43843 / 130Z).